Here is a 394-residue protein sequence, read N- to C-terminus: Elongation factor Tu (394 aa).

The tr-type G domain maps to Lys10–Val204. A G1 region spans residues Gly19–Thr26. Gly19–Thr26 contacts GTP. Thr26 serves as a coordination point for Mg(2+). The G2 stretch occupies residues Gly60–Ser64. A G3 region spans residues Asp81 to Gly84. GTP-binding positions include Asp81–His85 and Asn136–Asp139. Residues Asn136–Asp139 are G4. Positions Ser174 to Leu176 are G5.

This sequence belongs to the TRAFAC class translation factor GTPase superfamily. Classic translation factor GTPase family. EF-Tu/EF-1A subfamily. Monomer.

The protein localises to the cytoplasm. It carries out the reaction GTP + H2O = GDP + phosphate + H(+). In terms of biological role, GTP hydrolase that promotes the GTP-dependent binding of aminoacyl-tRNA to the A-site of ribosomes during protein biosynthesis. This is Elongation factor Tu from Rickettsia helvetica.